Consider the following 872-residue polypeptide: Probable LRR receptor-like serine/threonine-protein kinase At1g51880 (872 aa).

The N-terminal stretch at Met1–Ala23 is a signal peptide. Over Gln24–Pro513 the chain is Extracellular. N-linked (GlcNAc...) asparagine glycans are attached at residues Asn40, Asn49, Asn96, Asn181, Asn255, Asn268, Asn294, Asn339, and Asn401. LRR repeat units lie at residues Arg411–Thr434, Gln435–Met457, and Leu459–Arg482. 2 N-linked (GlcNAc...) asparagine glycosylation sites follow: Asn464 and Asn472. A helical transmembrane segment spans residues Ile514 to Val534. The Cytoplasmic portion of the chain corresponds to Arg535 to Arg872. Phosphothreonine is present on Thr557. The region spanning Asn566 to Val838 is the Protein kinase domain. ATP-binding positions include Leu572–Val580 and Lys593. Tyr638 is modified (phosphotyrosine). Asp690 (proton acceptor) is an active-site residue. Ser724 is modified (phosphoserine). A phosphothreonine mark is found at Thr725 and Thr730. Phosphotyrosine is present on Tyr738.

The protein belongs to the protein kinase superfamily. Ser/Thr protein kinase family.

The protein resides in the membrane. The catalysed reaction is L-seryl-[protein] + ATP = O-phospho-L-seryl-[protein] + ADP + H(+). It carries out the reaction L-threonyl-[protein] + ATP = O-phospho-L-threonyl-[protein] + ADP + H(+). This chain is Probable LRR receptor-like serine/threonine-protein kinase At1g51880, found in Arabidopsis thaliana (Mouse-ear cress).